A 560-amino-acid polypeptide reads, in one-letter code: Eukaryotic translation initiation factor 3 subunit D-1 (560 aa).

Positions 98 to 166 (VQKPPHQRGR…RGPPPKMRES (69 aa)) are disordered. Residues 100–121 (KPPHQRGRFRNMRNSRSGRGRN) show a composition bias toward basic residues. Thr128 carries the phosphothreonine modification. Residues 147–156 (GRGMGKKFGH) are compositionally biased toward basic residues. Residues 291–305 (EFDLLTVNESSVEPP) are RNA gate.

This sequence belongs to the eIF-3 subunit D family. As to quaternary structure, component of the eukaryotic translation initiation factor 3 (eIF-3) complex. The eIF-3 complex interacts with pix.

The protein localises to the cytoplasm. In terms of biological role, mRNA cap-binding component of the eukaryotic translation initiation factor 3 (eIF-3) complex, which is involved in protein synthesis of a specialized repertoire of mRNAs and, together with other initiation factors, stimulates binding of mRNA and methionyl-tRNAi to the 40S ribosome. The eIF-3 complex specifically targets and initiates translation of a subset of mRNAs involved in cell proliferation. In the eIF-3 complex, eif3d specifically recognizes and binds the 7-methylguanosine cap of a subset of mRNAs. This chain is Eukaryotic translation initiation factor 3 subunit D-1, found in Drosophila melanogaster (Fruit fly).